The sequence spans 183 residues: Holliday junction branch migration complex subunit RuvA (183 aa).

Residues 1–63 (MTVGLIGVVE…EDAHLLYGFL (63 aa)) form a domain I region. The tract at residues 64–141 (EESEKILFER…IQDETKPVHN (78 aa)) is domain II. Position 141 (Asn-141) is a region of interest, flexible linker. The interval 141–183 (NEAFLALESLGFKSAEINPILKKLKPNLSVEEAIKEALQQLRS) is domain III.

This sequence belongs to the RuvA family. As to quaternary structure, homotetramer. Forms an RuvA(8)-RuvB(12)-Holliday junction (HJ) complex. HJ DNA is sandwiched between 2 RuvA tetramers; dsDNA enters through RuvA and exits via RuvB. An RuvB hexamer assembles on each DNA strand where it exits the tetramer. Each RuvB hexamer is contacted by two RuvA subunits (via domain III) on 2 adjacent RuvB subunits; this complex drives branch migration. In the full resolvosome a probable DNA-RuvA(4)-RuvB(12)-RuvC(2) complex forms which resolves the HJ.

It localises to the cytoplasm. In terms of biological role, the RuvA-RuvB-RuvC complex processes Holliday junction (HJ) DNA during genetic recombination and DNA repair, while the RuvA-RuvB complex plays an important role in the rescue of blocked DNA replication forks via replication fork reversal (RFR). RuvA specifically binds to HJ cruciform DNA, conferring on it an open structure. The RuvB hexamer acts as an ATP-dependent pump, pulling dsDNA into and through the RuvAB complex. HJ branch migration allows RuvC to scan DNA until it finds its consensus sequence, where it cleaves and resolves the cruciform DNA. This is Holliday junction branch migration complex subunit RuvA from Helicobacter acinonychis (strain Sheeba).